The sequence spans 104 residues: MKVHVRKSDTVVVISGKDKGKTGEVLKVYPKTGKVLVQGINIVKKHQKANKSQVESAIIEREAAINSSKVMLYCNKCKNATRIANKILDDGTKVRVCKKCSETF.

This sequence belongs to the universal ribosomal protein uL24 family. In terms of assembly, part of the 50S ribosomal subunit.

Functionally, one of two assembly initiator proteins, it binds directly to the 5'-end of the 23S rRNA, where it nucleates assembly of the 50S subunit. In terms of biological role, one of the proteins that surrounds the polypeptide exit tunnel on the outside of the subunit. In Clostridium botulinum (strain Alaska E43 / Type E3), this protein is Large ribosomal subunit protein uL24.